A 30-amino-acid chain; its full sequence is Large ribosomal subunit protein bL25 (30 aa).

The protein belongs to the bacterial ribosomal protein bL25 family. As to quaternary structure, part of the 50S ribosomal subunit; part of the 5S rRNA/L5/L18/L25 subcomplex. Contacts the 5S rRNA. Binds to the 5S rRNA independently of L5 and L18.

Functionally, this is one of the proteins that binds to the 5S RNA in the ribosome where it forms part of the central protuberance. This is Large ribosomal subunit protein bL25 (rplY) from Anabaena variabilis.